The chain runs to 262 residues: S-methyl-5'-thioadenosine phosphorylase (262 aa).

Phosphate contacts are provided by residues serine 12, 54–55 (RH), and 87–88 (SA). Methionine 185 is a binding site for substrate. Threonine 186 is a binding site for phosphate. 209-211 (DYD) is a substrate binding site.

The protein belongs to the PNP/MTAP phosphorylase family. MTAP subfamily. In terms of assembly, homohexamer. Dimer of a homotrimer.

It carries out the reaction S-methyl-5'-thioadenosine + phosphate = 5-(methylsulfanyl)-alpha-D-ribose 1-phosphate + adenine. It functions in the pathway amino-acid biosynthesis; L-methionine biosynthesis via salvage pathway; S-methyl-5-thio-alpha-D-ribose 1-phosphate from S-methyl-5'-thioadenosine (phosphorylase route): step 1/1. Catalyzes the reversible phosphorylation of S-methyl-5'-thioadenosine (MTA) to adenine and 5-methylthioribose-1-phosphate. Involved in the breakdown of MTA, a major by-product of polyamine biosynthesis. Responsible for the first step in the methionine salvage pathway after MTA has been generated from S-adenosylmethionine. Has broad substrate specificity with 6-aminopurine nucleosides as preferred substrates. The polypeptide is S-methyl-5'-thioadenosine phosphorylase (Thermofilum pendens (strain DSM 2475 / Hrk 5)).